A 295-amino-acid polypeptide reads, in one-letter code: Glutamyl-Q tRNA(Asp) synthetase (295 aa).

Residues 9-13 (RFAPT) and Glu45 contribute to the L-glutamate site. The short motif at 12 to 22 (PTPSGFLHFGS) is the 'HIGH' region element. The Zn(2+) site is built by Cys101, Cys103, Tyr115, and Cys119. The L-glutamate site is built by Tyr172 and Arg190. The short motif at 228–232 (KLGKS) is the 'KMSKS' region element. Lys231 serves as a coordination point for ATP.

The protein belongs to the class-I aminoacyl-tRNA synthetase family. GluQ subfamily. It depends on Zn(2+) as a cofactor.

Its function is as follows. Catalyzes the tRNA-independent activation of glutamate in presence of ATP and the subsequent transfer of glutamate onto a tRNA(Asp). Glutamate is transferred on the 2-amino-5-(4,5-dihydroxy-2-cyclopenten-1-yl) moiety of the queuosine in the wobble position of the QUC anticodon. The chain is Glutamyl-Q tRNA(Asp) synthetase from Pseudomonas putida (strain GB-1).